The primary structure comprises 582 residues: Aspartate--tRNA ligase (582 aa).

Glutamate 174 is an L-aspartate binding site. Positions glutamine 198–lysine 201 are aspartate. Arginine 220 contributes to the L-aspartate binding site. ATP-binding positions include arginine 220–glutamate 222 and glutamine 229. Position 443 (histidine 443) interacts with L-aspartate. Glutamate 477 serves as a coordination point for ATP. Residue arginine 484 participates in L-aspartate binding. Glycine 529 to arginine 532 contributes to the ATP binding site.

The protein belongs to the class-II aminoacyl-tRNA synthetase family. Type 1 subfamily. In terms of assembly, homodimer.

The protein resides in the cytoplasm. It catalyses the reaction tRNA(Asp) + L-aspartate + ATP = L-aspartyl-tRNA(Asp) + AMP + diphosphate. Catalyzes the attachment of L-aspartate to tRNA(Asp) in a two-step reaction: L-aspartate is first activated by ATP to form Asp-AMP and then transferred to the acceptor end of tRNA(Asp). This Streptococcus equi subsp. zooepidemicus (strain MGCS10565) protein is Aspartate--tRNA ligase.